Reading from the N-terminus, the 160-residue chain is Small ribosomal subunit protein uS7 (160 aa).

Belongs to the universal ribosomal protein uS7 family. As to quaternary structure, part of the 30S ribosomal subunit. Contacts proteins S9 and S11.

Functionally, one of the primary rRNA binding proteins, it binds directly to 16S rRNA where it nucleates assembly of the head domain of the 30S subunit. Is located at the subunit interface close to the decoding center, probably blocks exit of the E-site tRNA. The protein is Small ribosomal subunit protein uS7 of Ehrlichia canis (strain Jake).